A 203-amino-acid chain; its full sequence is Elongation factor Ts (203 aa).

Residues 80 to 83 form an involved in Mg(2+) ion dislocation from EF-Tu region; it reads TDFV.

The protein belongs to the EF-Ts family.

It localises to the cytoplasm. In terms of biological role, associates with the EF-Tu.GDP complex and induces the exchange of GDP to GTP. It remains bound to the aminoacyl-tRNA.EF-Tu.GTP complex up to the GTP hydrolysis stage on the ribosome. This is Elongation factor Ts from Moorella thermoacetica (strain ATCC 39073 / JCM 9320).